Consider the following 154-residue polypeptide: UPF0225 protein Spro_2712 (154 aa).

It belongs to the UPF0225 family.

This Serratia proteamaculans (strain 568) protein is UPF0225 protein Spro_2712.